We begin with the raw amino-acid sequence, 207 residues long: Probable GTP-binding protein EngB (207 aa).

In terms of domain architecture, EngB-type G spans 22–193 (RVPEIVFAGR…LAHFDHYLSG (172 aa)). Residues 30-37 (GRSNVGKS), 57-61 (GKTRL), 75-78 (DIPG), 142-145 (TKDD), and 172-174 (YSS) each bind GTP. Positions 37 and 59 each coordinate Mg(2+).

It belongs to the TRAFAC class TrmE-Era-EngA-EngB-Septin-like GTPase superfamily. EngB GTPase family. Requires Mg(2+) as cofactor.

Functionally, necessary for normal cell division and for the maintenance of normal septation. The chain is Probable GTP-binding protein EngB from Chlorobium luteolum (strain DSM 273 / BCRC 81028 / 2530) (Pelodictyon luteolum).